The sequence spans 171 residues: Putative metal-dependent hydrolase BH0277 (171 aa).

Zn(2+) is bound by residues His64, His155, and His159.

This sequence belongs to the metal hydrolase YfiT family. Homodimer. Zn(2+) serves as cofactor.

The protein resides in the cytoplasm. Its function is as follows. Possible metal-dependent hydrolase. In Halalkalibacterium halodurans (strain ATCC BAA-125 / DSM 18197 / FERM 7344 / JCM 9153 / C-125) (Bacillus halodurans), this protein is Putative metal-dependent hydrolase BH0277.